The sequence spans 444 residues: MANVVVIGAQWGDEGKGKITDLLSRSADVVVRYQGGVNAGHTVVVGEQTLKLHLIPSGILYPDTQCIIGSGTVIDPKVLLGEVEMLEQLGISTDHLLISQTAHVTMPYHRLIDQASEQQRGSHKIGTTGRGIGPTYADKSERTGIRILDLMDPEGLREQLTWTIAQKNVILDKLYGLPPLDAESVIEEYSGYAERLRPHVVDSSLTIDEAWRKRKNILFEGAQGTLLDLDHGTYPYVTSSNPVAGGACIGAGVGPTIIDRVIGVAKAYTTRVGEGPFPTELHGDIGELLCQRGAEFGTTTGRRRRCGWFDAVIGRYAVRINGIDCLAITKLDVLDDLDEIQVCVAYDIDGERCDHFPSSARSFANCQPIYKTVPGWKQSTSHCRNLEDLPKAALDYLKFLAELMEVPIAIVSLGASRDQTIIVEDPIHGPKRALLYTNGDSSAS.

GTP is bound by residues 12 to 18 (GDEGKGK) and 40 to 42 (GHT). The active-site Proton acceptor is Asp13. The Mg(2+) site is built by Asp13 and Gly40. IMP is bound by residues 13 to 16 (DEGK), 38 to 41 (NAGH), Thr128, Arg142, Gln223, Thr238, and Arg302. His41 acts as the Proton donor in catalysis. 298–304 (TTTGRRR) contacts substrate. GTP is bound by residues Arg304, 330–332 (KLD), and 412–414 (SLG).

It belongs to the adenylosuccinate synthetase family. As to quaternary structure, homodimer. It depends on Mg(2+) as a cofactor.

Its subcellular location is the cytoplasm. The catalysed reaction is IMP + L-aspartate + GTP = N(6)-(1,2-dicarboxyethyl)-AMP + GDP + phosphate + 2 H(+). Its pathway is purine metabolism; AMP biosynthesis via de novo pathway; AMP from IMP: step 1/2. Functionally, plays an important role in the de novo pathway of purine nucleotide biosynthesis. Catalyzes the first committed step in the biosynthesis of AMP from IMP. In Synechococcus elongatus (strain ATCC 33912 / PCC 7942 / FACHB-805) (Anacystis nidulans R2), this protein is Adenylosuccinate synthetase.